We begin with the raw amino-acid sequence, 329 residues long: Two pore potassium channel protein sup-9 (329 aa).

The Cytoplasmic portion of the chain corresponds to 1–8 (MKRQNIRT). A helical membrane pass occupies residues 9–29 (LSLIVCTLTYLLVGAAVFDAL). The N-linked (GlcNAc...) asparagine glycan is linked to Asn-53. Residues 80 to 100 (FSGAFYFATTVITTIGYGHST) constitute an intramembrane region (pore-forming). A Selectivity filter motif is present at residues 93 to 98 (TIGYGH). The helical transmembrane segment at 108–128 (VFCMLYALAGIPLGLIMFQSI) threads the bilayer. At 129–157 (GERMNTFAAKLLRFIRRAAGKQPIVTSSD) the chain is on the cytoplasmic side. Residues 158 to 178 (LIIFCTGWGGLLIFGGAFMFS) traverse the membrane as a helical segment. A glycan (N-linked (GlcNAc...) asparagine) is linked at Asn-182. Residues 186–206 (FDAVYYCFVTLTTIGFGDYVA) constitute an intramembrane region (pore-forming). Positions 198–203 (TIGFGD) match the Selectivity filter motif. Residues 220–240 (VFFSLVFILFGLTVISAAMNL) traverse the membrane as a helical segment. Over 241-329 (LVLRFLTMNT…FSGMTTRPKY (89 aa)) the chain is Cytoplasmic. Positions 289–296 (SLASCSCY) are may be important for regulation by and/or interaction with sup-10. Residues 307–329 (HRKHTEPHGGPPTFSGMTTRPKY) form a disordered region.

The protein belongs to the two pore domain potassium channel (TC 1.A.1.8) family. In terms of assembly, may form a complex with the regulatory subunits unc-93 and sup-10. In terms of tissue distribution, low levels along surface of body-wall muscle cells, in vulval and intestinal muscles and, more weakly, in anal depressor and sphincter muscles. Also expressed in a subset of head neurons.

It localises to the membrane. In terms of biological role, potassium channel involved in coordination of muscle contraction. Activity is regulated by sup-18. This is Two pore potassium channel protein sup-9 from Caenorhabditis elegans.